A 544-amino-acid polypeptide reads, in one-letter code: Chaperonin GroEL (544 aa).

Residues 30-33 (TLGP), Lys-51, 87-91 (DGTTT), Gly-415, and Asp-495 each bind ATP.

It belongs to the chaperonin (HSP60) family. Forms a cylinder of 14 subunits composed of two heptameric rings stacked back-to-back. Interacts with the co-chaperonin GroES.

It localises to the cytoplasm. The enzyme catalyses ATP + H2O + a folded polypeptide = ADP + phosphate + an unfolded polypeptide.. Its function is as follows. Together with its co-chaperonin GroES, plays an essential role in assisting protein folding. The GroEL-GroES system forms a nano-cage that allows encapsulation of the non-native substrate proteins and provides a physical environment optimized to promote and accelerate protein folding. This chain is Chaperonin GroEL, found in Neisseria meningitidis serogroup B (strain ATCC BAA-335 / MC58).